Here is a 66-residue protein sequence, read N- to C-terminus: KEGYLVNKSTGCKYGCFWLGKNENCDKECKAKNQGGSYGYCYSFACWCEGLPESTPTYPLPNKSCS.

Positions K1 to S66 constitute an LCN-type CS-alpha/beta domain. 4 disulfides stabilise this stretch: C12–C65, C16–C41, C25–C46, and C29–C48.

Belongs to the long (4 C-C) scorpion toxin superfamily. Sodium channel inhibitor family. Beta subfamily. In terms of tissue distribution, expressed by the venom gland.

Its subcellular location is the secreted. Its function is as follows. Beta toxin that binds site-4 of sodium channels (Nav) and reduces peak current (observed on Nav1.1/SCN1A, Nav1.2/SCN2A, Nav1.3/SCN3A, Nav1.4/SCN5A, Nav1.5/SCN4A, and Nav1.6/SCN8A (IC(50)=44.9 nM)), shifts the voltage of activation toward more negative potentials (observed on Nav1.6, Nav1.1 (weak), Nav1.2 (weak), and Nav1.7 (weak)), and induces resurgent currents at negative voltages following brief and strong depolarizations (observed on Nav1.6, Nav1.1 (weak), Nav1.2 (weak), and Nav1.4 (weak)). This toxin is only active on crustaceans. This Centruroides limpidus (Mexican scorpion) protein is Toxin Cll1.